A 218-amino-acid chain; its full sequence is uncharacterized protein (218 aa).

4 helical membrane passes run 10–30 (IPPL…SLGI), 55–75 (IGVG…GYSI), 147–167 (VTGG…AGMA), and 175–195 (FSWI…ILLR).

This sequence belongs to the DedA family.

The protein resides in the cell membrane. This is an uncharacterized protein from Mycobacterium tuberculosis (strain CDC 1551 / Oshkosh).